The primary structure comprises 185 residues: Ubiquitin-conjugating enzyme E2 2 (185 aa).

The region spanning Pro-4–Leu-150 is the UBC core domain. Cys-88 (glycyl thioester intermediate) is an active-site residue. The span at Trp-149–Ala-173 shows a compositional bias: acidic residues. The interval Trp-149–Ala-185 is disordered.

The protein belongs to the ubiquitin-conjugating enzyme family.

It localises to the cytoplasm. The protein resides in the nucleus. It catalyses the reaction S-ubiquitinyl-[E1 ubiquitin-activating enzyme]-L-cysteine + [E2 ubiquitin-conjugating enzyme]-L-cysteine = [E1 ubiquitin-activating enzyme]-L-cysteine + S-ubiquitinyl-[E2 ubiquitin-conjugating enzyme]-L-cysteine.. It functions in the pathway protein modification; protein ubiquitination. In terms of biological role, catalyzes the covalent attachment of ubiquitin to other proteins. Plays a role in transcription regulation by catalyzing the monoubiquitination of histone H2B to form H2BK123ub1. H2BK123ub1 gives a specific tag for epigenetic transcriptional activation and is also a prerequisite for H3K4me and H3K79me formation. Also involved in postreplication repair of UV-damaged DNA, in N-end rule-dependent protein degradation and in sporulation. This chain is Ubiquitin-conjugating enzyme E2 2 (UBC2), found in Mycosarcoma maydis (Corn smut fungus).